The chain runs to 1228 residues: MEVPLVAYLHSCPNCGGPITSDRLASGLPCRECLPDGAKAGSIKQVITALRKRKALQGLAWVEAYLRGYEEFAEFFKRIVGFEMWGAQRLWARRFVRGKSFAIVAPTGSGKTTFILIATLYSAKQGKRALLIFPTSALAHQAYKKLLTFAERGGVSLKALAYHSLLTEREKKEALEALERGDFDVLVTTSAFLPKRFELLSRYKFDFVAADDVDSILRATSKNIDRILRLLGVSDAVLNTALEVINLTKQLRKAEVAGDLKEVERLDQEMAKLRAKLREEVQRLKLGVFVASGALAKARRTVRLLLFREILGFDVGGRAEGLRNVVDLYVEASDNVIEQTLALVKRLGPGGIIYVQDRELGEAIVERAREAGLAVEHFFRPRRGVLESFERGELAALVGLASSRSALVRGIDLPHVIRYVIFVGVPKFKFRVRLEEFSIPAYLTFLYNVRSVLAGDARYKADRLIGQLKRLAPYALSVQEALKKASEGAELSSFDRHAVDVVKSAVEFVNSLLQNEEIRKAIETSSEVKLAYIDGEMYVLVPDVTTYIQGSGRTSRLYAGGLSKGLSVVIVDDPKVFHALKRELSLRFDEAEFKHLGEADLDKILADVDRDRKTIRDIMEGRLVPAARGVDLMRTILMVVESPTKARTIANFFGRPSLIISEGIPIYEVSTGDAVLMVTASLGHIYELPTSLNKIDQRQREVLAKWFGDFKHGNYDGENYAVIVKEYGFVPVYNKIWRCRGAVYVDDIDIPPGCKPLDVLEAIRNIAVEVDTVLLGTDPDSEGEKIAFDLYLGLRPYVQDIRRVEFHEVTRRAILNALANPRGVNFSLVKAQIVRRVEDRWIGFGLSKILQANFKNPNLSAGRVQTPVLGWIVNTYEESLKNRVYNVELQLNDVDIRLQVPRDVLDVLRKKKRVAIKLVARERRQVNPPPPYTTDELLRDAVNKLGLSADYAMRLAQDLFESGLITYHRTDSTRVSTAGIAIAREYIVRKFGEGVFKPRSWGEAEEGAHEAIRPTRPIDVEELRGLVNAGVIQLAIQLTKSHYQLYDIIFRRFMASQMEPSVVEVAKYNVEIDGHVIQLERTVGVAYMGFQTLYQLTPVEPELPTGTLDVVIKRYRVVRRVLSQADVLALMRQRGIGRPSTYAHILQVLAKRYYVYVTGRTKLMIPTKRGREIFRFLKEAFGKLVSEDRTRLIEQYMDAIEVGKARYEEVIAELYDEFRKEVLPHLAS.

The segment at 1–41 (MEVPLVAYLHSCPNCGGPITSDRLASGLPCRECLPDGAKAG) adopts an RG N-terminal-type zinc-finger fold. Positions 12, 15, 30, and 33 each coordinate Zn(2+). ATP contacts are provided by residues Gln88 and 105–112 (APTGSGKT). One can recognise a Helicase ATP-binding domain in the interval 92 to 255 (ARRFVRGKSF…NLTKQLRKAE (164 aa)). A DEAD box motif is present at residues 211–214 (DDVD). Residues 631-1228 (DLMRTILMVV…RKEVLPHLAS (598 aa)) form a topoisomerase I region. The Toprim domain occupies 635 to 809 (TILMVVESPT…DIRRVEFHEV (175 aa)). 2 residues coordinate Mg(2+): Glu641 and Asp778. Residues 825 to 1223 (NFSLVKAQIV…LYDEFRKEVL (399 aa)) enclose the Topo IA-type catalytic domain. Tyr967 acts as the O-(5'-phospho-DNA)-tyrosine intermediate in catalysis.

It in the N-terminal section; belongs to the DEAD box helicase family. DDVD subfamily. This sequence in the C-terminal section; belongs to the type IA topoisomerase family. Monomer. It depends on Zn(2+) as a cofactor. The cofactor is Mg(2+).

It is found in the cytoplasm. It catalyses the reaction ATP + H2O = ADP + phosphate + H(+). Modifies the topological state of DNA by introducing positive supercoils in an ATP-dependent process, increasing the linking number in steps of +1. Binds to single-stranded DNA, transiently cleaves and then rejoins the ends, introducing a positive supercoil in the process. The scissile phosphodiester is attacked by the catalytic tyrosine of the enzyme, resulting in the formation of a DNA-(5'-phosphotyrosyl)-enzyme intermediate. Probably involved in rewinding DNA strands in regions of the chromosome that have opened up to allow replication, transcription, DNA repair and/or for DNA protection. This chain is Reverse gyrase, found in Pyrobaculum aerophilum (strain ATCC 51768 / DSM 7523 / JCM 9630 / CIP 104966 / NBRC 100827 / IM2).